A 64-amino-acid polypeptide reads, in one-letter code: Large ribosomal subunit protein uL29 (64 aa).

Belongs to the universal ribosomal protein uL29 family.

This is Large ribosomal subunit protein uL29 from Ligilactobacillus salivarius (strain UCC118) (Lactobacillus salivarius).